The primary structure comprises 305 residues: Dioxygenase hkm4 (305 aa).

Positions 140, 142, and 216 each coordinate Fe cation.

It belongs to the PhyH family. The cofactor is Fe cation.

Its pathway is secondary metabolite biosynthesis. Dioxygenase; part of the gene cluster that mediates the biosynthesis of hancockiamides, an unusual new family of N-cinnamoylated piperazines. The NRPS hkm10 and the NmrA-like reductase hkm9 are proposed to convert two molecules of L-Phe to the intermediary piperazine called xenocockiamide A. Xenocockiamide A is then converted to hancockiamide D via a series of hydroxylations and O-methylations. The tyrosinase hkm6 may catalyze an aromatic hydroxylation, then the 2-oxoglutarate-dependent Fe(II) dioxygenase hkm4 and the FAD-dependent phenol hydroxylase hkm7 may catalyze consecutive hydroxylations to install 2 more hydroxy groups, and the methyltransferase hkm8 probably catalyzes two methylations using 2 molecules of S-adenosyl-L-methionine (SAM). The NRPS hkm11 activates and transfers trans-cinnamate supplied by the PAL hkm12 to hancockiamide D and produces hancockiamide A. NRPS Hkm11 has the flexibility to tolerate the bulky hancockiamide G as a substrate and the absence of the acetyl-transferase hkm3 opens up the opportunity for hkm11 to introduce a second N-cinnamoyl moiety. The cytochrome P450 monooxygenase hkm5 catalyzes the methylenedioxy bridge formation, converting hancockiamide A into hancockiamide G. Hkm5 can also convert hancockiamide B into hancockiamide C, and hancockiamide D into hancockiamide H. The N-acetyltransferase hkm3 finally transfers an acetyl group to 1-N of piperazine, converting hancockiamide A into hancockiamide B and hancockiamide G into hancockiamide C. In Aspergillus hancockii, this protein is Dioxygenase hkm4.